Reading from the N-terminus, the 217-residue chain is MNQSLLAPFGTAIERVEAGLNALRQGQGVLVVDDEDRENEGDLIFAAETLTNAQMAMLIRECSGIVCLCLPDEKVKALELPAMVEHNSSQYGTAFTVSIEATVGVTTGVSAADRVTTIKAAIADNAKPSDLARPGHVYPLRAQPGGVLTRRGHTEGTIDLVQLAGLKPAGVLCEVTNPDGTMARLPEIIAFGALHNMPVLTIEDIVVYRKSLLAKVG.

D-ribulose 5-phosphate contacts are provided by residues 37 to 38, Asp-42, 150 to 154, and Glu-174; these read RE and RRGHT. Glu-38 contributes to the Mg(2+) binding site. His-153 is a Mg(2+) binding site.

The protein belongs to the DHBP synthase family. In terms of assembly, homodimer. It depends on Mg(2+) as a cofactor. Mn(2+) is required as a cofactor.

It carries out the reaction D-ribulose 5-phosphate = (2S)-2-hydroxy-3-oxobutyl phosphate + formate + H(+). It functions in the pathway cofactor biosynthesis; riboflavin biosynthesis; 2-hydroxy-3-oxobutyl phosphate from D-ribulose 5-phosphate: step 1/1. Functionally, catalyzes the conversion of D-ribulose 5-phosphate to formate and 3,4-dihydroxy-2-butanone 4-phosphate. The protein is 3,4-dihydroxy-2-butanone 4-phosphate synthase of Shewanella baltica (strain OS223).